We begin with the raw amino-acid sequence, 88 residues long: Phosphocarrier protein HPr (88 aa).

The 88-residue stretch at 1 to 88 (MKKIQVVVKD…KAVLEKHQVI (88 aa)) folds into the HPr domain. Histidine 15 serves as the catalytic Pros-phosphohistidine intermediate. Phosphoserine; by HPrK/P is present on serine 47.

Belongs to the HPr family.

Its subcellular location is the cytoplasm. With respect to regulation, phosphorylation on Ser-47 inhibits the phosphoryl transfer from enzyme I to HPr. Functionally, general (non sugar-specific) component of the phosphoenolpyruvate-dependent sugar phosphotransferase system (sugar PTS). This major carbohydrate active-transport system catalyzes the phosphorylation of incoming sugar substrates concomitantly with their translocation across the cell membrane. The phosphoryl group from phosphoenolpyruvate (PEP) is transferred to the phosphoryl carrier protein HPr by enzyme I. Phospho-HPr then transfers it to the PTS EIIA domain. P-Ser-HPr interacts with the catabolite control protein A (CcpA), forming a complex that binds to DNA at the catabolite response elements cre, operator sites preceding a large number of catabolite-regulated genes. Thus, P-Ser-HPr is a corepressor in carbon catabolite repression (CCR), a mechanism that allows bacteria to coordinate and optimize the utilization of available carbon sources. P-Ser-HPr also plays a role in inducer exclusion, in which it probably interacts with several non-PTS permeases and inhibits their transport activity. In Mycoplasma pneumoniae (strain ATCC 29342 / M129 / Subtype 1) (Mycoplasmoides pneumoniae), this protein is Phosphocarrier protein HPr (ptsH).